Reading from the N-terminus, the 419-residue chain is Bilin biosynthesis protein CpeY (419 aa).

In terms of biological role, involved in the biosynthesis of bilin. The chain is Bilin biosynthesis protein CpeY (cpeY) from Synechococcus sp. (strain WH8020).